A 454-amino-acid chain; its full sequence is MSDNDTIVAQATPPGRGGVGILRISGLKAREVAETVLGKLPKPRYADYLPFKDADGSVLDQGIALWFPGPNSFTGEDVLELQGHGGPVILDLLLKRILTIPGLRIARPGEFSERAFLNDKLDLAQAEAIADLIDASSEQAARSALNSLQGAFSARVNHLVEALTHLRIYVEAAIDFPDEEIDFLSDGKIEAQLNDVIADLDAVRAEARQGSLLREGMKVVIAGRPNAGKSSLLNALAGREAAIVTDIAGTTRDVLREHIHIDGMPLHIIDTAGLREASDEVERIGIERAWQEIEQADRVLFMVDGTTTDAVDPAEIWPEFIARLPAKLPITVVRNKADITGETLGMSELNGHALIRLSARTGEGVDVLRNHLKQSMGFDTNMEGGFLARRRHLQALEQAAEHLQQGKAQLLGAWAGELLAEELRLAQQNLSEITGEFTSDDLLGRIFSSFCIGK.

Residues Arg23, Glu80, and Lys120 each coordinate (6S)-5-formyl-5,6,7,8-tetrahydrofolate. In terms of domain architecture, TrmE-type G spans 216–377; it reads GMKVVIAGRP…LRNHLKQSMG (162 aa). Asn226 is a K(+) binding site. GTP contacts are provided by residues 226–231, 245–251, 270–273, 335–338, and 358–360; these read NAGKSS, TDIAGTT, DTAG, NKAD, and SAR. Ser230 lines the Mg(2+) pocket. K(+) is bound by residues Thr245, Ile247, and Thr250. Thr251 is a Mg(2+) binding site. Residue Lys454 participates in (6S)-5-formyl-5,6,7,8-tetrahydrofolate binding.

Belongs to the TRAFAC class TrmE-Era-EngA-EngB-Septin-like GTPase superfamily. TrmE GTPase family. As to quaternary structure, homodimer. Heterotetramer of two MnmE and two MnmG subunits. It depends on K(+) as a cofactor.

The protein resides in the cytoplasm. Its function is as follows. Exhibits a very high intrinsic GTPase hydrolysis rate. Involved in the addition of a carboxymethylaminomethyl (cmnm) group at the wobble position (U34) of certain tRNAs, forming tRNA-cmnm(5)s(2)U34. This chain is tRNA modification GTPase MnmE, found in Escherichia coli O127:H6 (strain E2348/69 / EPEC).